A 379-amino-acid polypeptide reads, in one-letter code: Cytochrome b (379 aa).

Helical transmembrane passes span Phe33–Met53, Trp77–Ile98, Trp113–Leu133, and Phe178–Leu198. Residues His83 and His97 each contribute to the heme b site. Residues His182 and His196 each contribute to the heme b site. Residue His201 coordinates a ubiquinone. Helical transmembrane passes span Tyr226–Tyr246, Leu288–His308, Ile320–Gly340, and Tyr347–Pro367.

Belongs to the cytochrome b family. As to quaternary structure, the cytochrome bc1 complex contains 3 respiratory subunits (MT-CYB, CYC1 and UQCRFS1), 2 core proteins (UQCRC1 and UQCRC2) and probably 6 low-molecular weight proteins. The cofactor is heme b.

The protein resides in the mitochondrion inner membrane. Component of the ubiquinol-cytochrome c reductase complex (complex III or cytochrome b-c1 complex) that is part of the mitochondrial respiratory chain. The b-c1 complex mediates electron transfer from ubiquinol to cytochrome c. Contributes to the generation of a proton gradient across the mitochondrial membrane that is then used for ATP synthesis. This chain is Cytochrome b (mt-cyb), found in Anguilla mossambica (African longfin eel).